The sequence spans 252 residues: Sugar fermentation stimulation protein homolog (252 aa).

Belongs to the SfsA family.

This is Sugar fermentation stimulation protein homolog from Picosynechococcus sp. (strain ATCC 27264 / PCC 7002 / PR-6) (Agmenellum quadruplicatum).